The following is a 311-amino-acid chain: Malate dehydrogenase (311 aa).

Residues 7 to 13 and D34 contribute to the NAD(+) site; that span reads GAAGGIG. Residues R81 and R87 each contribute to the substrate site. NAD(+) contacts are provided by residues N94 and 117–119; that span reads ITN. 2 residues coordinate substrate: N119 and R153. The active-site Proton acceptor is H177. M227 contacts NAD(+).

The protein belongs to the LDH/MDH superfamily. MDH type 1 family. As to quaternary structure, homodimer.

The enzyme catalyses (S)-malate + NAD(+) = oxaloacetate + NADH + H(+). In terms of biological role, catalyzes the reversible oxidation of malate to oxaloacetate. The protein is Malate dehydrogenase of Pseudoalteromonas atlantica (strain T6c / ATCC BAA-1087).